The following is a 452-amino-acid chain: Na(+)/H(+) antiporter NhaA (452 aa).

11 helical membrane-spanning segments follow: residues 23-43, 71-91, 108-128, 136-156, 165-185, 189-209, 216-236, 316-336, 349-369, 385-405, and 418-438; these read MMLF…LSTI, LLQF…GLEI, LPIV…LLVV, GAAI…AVLG, VFLT…IALF, HINI…YLMG, LGLY…SGIH, IVGY…TLGG, VFLG…YGFV, LMAV…IATL, and EAKL…IVTL.

Belongs to the NhaA Na(+)/H(+) (TC 2.A.33) antiporter family.

The protein resides in the cell inner membrane. It catalyses the reaction Na(+)(in) + 2 H(+)(out) = Na(+)(out) + 2 H(+)(in). Na(+)/H(+) antiporter that extrudes sodium in exchange for external protons. The protein is Na(+)/H(+) antiporter NhaA of Porphyromonas gingivalis (strain ATCC BAA-308 / W83).